Reading from the N-terminus, the 405-residue chain is Riboflavin biosynthesis protein RibBA (405 aa).

The interval 1 to 205 (MEEIKLNTIE…IKDLIAYRLK (205 aa)) is DHBP synthase. D-ribulose 5-phosphate-binding positions include 30–31 (RE), Asp35, 144–148 (RAGHT), and Glu168. Mg(2+) is bound at residue Glu31. His147 serves as a coordination point for Mg(2+). Positions 206–405 (QESIVEKGVE…RMGHELHNIK (200 aa)) are GTP cyclohydrolase II. Residue 256 to 260 (RMHSS) coordinates GTP. Residues Cys261, Cys272, and Cys274 each contribute to the Zn(2+) site. Residues Gln277, 299–301 (EGR), and Thr321 each bind GTP. Asp333 (proton acceptor; for GTP cyclohydrolase activity) is an active-site residue. Arg335 serves as the catalytic Nucleophile; for GTP cyclohydrolase activity. Thr356 and Lys361 together coordinate GTP.

In the N-terminal section; belongs to the DHBP synthase family. This sequence in the C-terminal section; belongs to the GTP cyclohydrolase II family. Requires Mg(2+) as cofactor. It depends on Mn(2+) as a cofactor. Zn(2+) is required as a cofactor.

The enzyme catalyses D-ribulose 5-phosphate = (2S)-2-hydroxy-3-oxobutyl phosphate + formate + H(+). The catalysed reaction is GTP + 4 H2O = 2,5-diamino-6-hydroxy-4-(5-phosphoribosylamino)-pyrimidine + formate + 2 phosphate + 3 H(+). The protein operates within cofactor biosynthesis; riboflavin biosynthesis; 2-hydroxy-3-oxobutyl phosphate from D-ribulose 5-phosphate: step 1/1. It participates in cofactor biosynthesis; riboflavin biosynthesis; 5-amino-6-(D-ribitylamino)uracil from GTP: step 1/4. Catalyzes the conversion of D-ribulose 5-phosphate to formate and 3,4-dihydroxy-2-butanone 4-phosphate. In terms of biological role, catalyzes the conversion of GTP to 2,5-diamino-6-ribosylamino-4(3H)-pyrimidinone 5'-phosphate (DARP), formate and pyrophosphate. This chain is Riboflavin biosynthesis protein RibBA, found in Porphyromonas gingivalis (strain ATCC 33277 / DSM 20709 / CIP 103683 / JCM 12257 / NCTC 11834 / 2561).